Consider the following 399-residue polypeptide: uncharacterized protein (399 aa).

The protein belongs to the AdoMet synthetase 2 family.

This is an uncharacterized protein from Streptococcus pyogenes serotype M1.